A 481-amino-acid polypeptide reads, in one-letter code: Histidine--tRNA ligase, cytoplasmic (481 aa).

The tract at residues 1 to 48 (MSEPVVDNVTNKVEKMEVKEKTSAPPKEKKEKKSNKVQLKTPKGTQDY) is disordered. A compositionally biased stretch (basic and acidic residues) spans 12–31 (KVEKMEVKEKTSAPPKEKKE).

Belongs to the class-II aminoacyl-tRNA synthetase family.

It localises to the cytoplasm. The enzyme catalyses tRNA(His) + L-histidine + ATP = L-histidyl-tRNA(His) + AMP + diphosphate + H(+). The chain is Histidine--tRNA ligase, cytoplasmic (hisS) from Dictyostelium discoideum (Social amoeba).